The primary structure comprises 220 residues: Ribose-5-phosphate isomerase A (220 aa).

Substrate contacts are provided by residues 28 to 31 (TGST), 81 to 84 (DGAD), and 94 to 97 (KGGG). Glutamate 103 functions as the Proton acceptor in the catalytic mechanism. Lysine 121 serves as a coordination point for substrate.

This sequence belongs to the ribose 5-phosphate isomerase family. As to quaternary structure, homodimer.

The catalysed reaction is aldehydo-D-ribose 5-phosphate = D-ribulose 5-phosphate. The protein operates within carbohydrate degradation; pentose phosphate pathway; D-ribose 5-phosphate from D-ribulose 5-phosphate (non-oxidative stage): step 1/1. In terms of biological role, catalyzes the reversible conversion of ribose-5-phosphate to ribulose 5-phosphate. The chain is Ribose-5-phosphate isomerase A from Hydrogenovibrio crunogenus (strain DSM 25203 / XCL-2) (Thiomicrospira crunogena).